The following is a 35-amino-acid chain: Turgencin-B (35 aa).

Methionine sulfoxide occurs at positions 5 and 9. Intrachain disulfides connect Cys-7–Cys-31, Cys-11–Cys-27, and Cys-16–Cys-24. The residue at position 35 (Gly-35) is a Glycine amide.

In terms of processing, oxidation likely reduces antimicrobial activity against Gram-positive bacteria and Gram-negative bacteria.

The protein localises to the secreted. In terms of biological role, has antimicrobial activity against Gram-positive bacteria (C.glutamicum ATCC 13032 (MIC=1.6 uM) and B.subtilis ATCC 23857 (MIC=1.6 uM)) and Gram-negative bacteria (E.coli ATCC 25922 (MIC=12.5 uM) and P.aeruginosa ATCC 27853 (MIC=25.0 uM)). Displays very low activity against the Gram-positive bacteria S.aureus ATCC 9144 (MIC&gt;100 uM). This Synoicum turgens (Colonial ascidian) protein is Turgencin-B.